A 427-amino-acid chain; its full sequence is Glucose-1-phosphate adenylyltransferase (427 aa).

AMP is bound by residues arginine 40, histidine 46, and arginine 52. Tyrosine 114 lines the alpha-D-glucose 1-phosphate pocket. Arginine 130 provides a ligand contact to AMP. Alpha-D-glucose 1-phosphate-binding positions include glycine 179, 194–195 (EK), and serine 212. AMP is bound at residue arginine 386.

It belongs to the bacterial/plant glucose-1-phosphate adenylyltransferase family. As to quaternary structure, homotetramer.

The enzyme catalyses alpha-D-glucose 1-phosphate + ATP + H(+) = ADP-alpha-D-glucose + diphosphate. It functions in the pathway glycan biosynthesis; glycogen biosynthesis. Allosterically activated by fructose-1,6-bisphosphate (F16BP) and inhibited by AMP. In terms of biological role, involved in the biosynthesis of ADP-glucose, a building block required for the elongation reactions to produce glycogen. Catalyzes the reaction between ATP and alpha-D-glucose 1-phosphate (G1P) to produce pyrophosphate and ADP-Glc. This is Glucose-1-phosphate adenylyltransferase from Cronobacter sakazakii (strain ATCC BAA-894) (Enterobacter sakazakii).